Consider the following 316-residue polypeptide: Diacylglycerol kinase (316 aa).

Residues 1–132 (MRKRARIIYN…VDIGKMNNRY (132 aa)) enclose the DAGKc domain. Residues 10–14 (NPTSG), Thr-41, 67–73 (GDGTLNE), and Thr-94 contribute to the ATP site. Mg(2+)-binding residues include Lys-213, Asp-216, and Tyr-218. Glu-273 functions as the Proton acceptor in the catalytic mechanism.

Belongs to the diacylglycerol/lipid kinase family. As to quaternary structure, homodimer. Requires Mg(2+) as cofactor.

It carries out the reaction a 1,2-diacyl-sn-glycerol + ATP = a 1,2-diacyl-sn-glycero-3-phosphate + ADP + H(+). Catalyzes the phosphorylation of diacylglycerol (DAG) into phosphatidic acid. Is a key enzyme involved in the production of lipoteichoic acid by reintroducing DAG formed from the breakdown of membrane phospholipids into the phosphatidylglycerol biosynthetic pathway. The sequence is that of Diacylglycerol kinase (dagK) from Staphylococcus epidermidis (strain ATCC 35984 / DSM 28319 / BCRC 17069 / CCUG 31568 / BM 3577 / RP62A).